The following is a 358-amino-acid chain: Beta-lactamase (358 aa).

Ser60 (acyl-ester intermediate) is an active-site residue. The active-site Proton acceptor is the Tyr146. Position 311 to 313 (311 to 313 (KTG)) interacts with substrate.

Belongs to the class-C beta-lactamase family.

The protein resides in the periplasm. The enzyme catalyses a beta-lactam + H2O = a substituted beta-amino acid. In terms of biological role, this protein is a serine beta-lactamase with a substrate specificity for cephalosporins. This Pseudomonas fluorescens protein is Beta-lactamase.